The following is a 473-amino-acid chain: Histone-lysine N-methyltransferase ATXR2 (473 aa).

Positions 33–441 (KLITSRRCNG…KNEEVTISYI (409 aa)) constitute an SET domain. The MYND-type; degenerate zinc-finger motif lies at 134–203 (EEQCGGSSSS…DWESSHSLLC (70 aa)). The Zn(2+) site is built by Cys-176, Cys-180, His-199, and Cys-203. Residue Tyr-440 coordinates S-adenosyl-L-methionine.

Belongs to the class V-like SAM-binding methyltransferase superfamily. Histone-lysine methyltransferase family. TRX/MLL subfamily. In terms of assembly, interacts with JMJ30. Binds to ARF7 and ARF19 in the nucleus.

It is found in the nucleus. It carries out the reaction L-lysyl-[histone] + S-adenosyl-L-methionine = N(6)-methyl-L-lysyl-[histone] + S-adenosyl-L-homocysteine + H(+). In terms of biological role, histone methyltransferase that methylates 'Lys-36' (H3K36me) of histone H3 to produce H3K36me3. Promotes early stages of cellular dedifferentiation through H3K36me3-dependent, and to a lesser degree H3K4me3-dependent, activation of Lateral organ Boundaries-Domain (LBD) (e.g. LBD16 and LBD29) genes. Positive regulator of root organogenesis including lateral root formation as well as adventitious root formation from wounded leaf tissues. Recruited by JMJ30/ARF (e.g. ARF7 and ARF19) complexes to promote the deposition of H3K36me3 and, to a lower extent, H3K4me3 at LBD genes promoters, thus ensuring their stable activation during callus formation on callus-inducing medium (CIM). This Arabidopsis thaliana (Mouse-ear cress) protein is Histone-lysine N-methyltransferase ATXR2.